The sequence spans 364 residues: Lysophosphatidic acid receptor 1 (364 aa).

Residues 1–50 (MAAASTSSPVISQPQFTAMNEQQCFYNESIAFFYNRSGKYLATEWNTVSK) lie on the Extracellular side of the membrane. Cystine bridges form between Cys24/Cys190 and Cys188/Cys195. 2 N-linked (GlcNAc...) asparagine glycosylation sites follow: Asn27 and Asn35. Lys39 is a binding site for a 1-acyl-sn-glycero-3-phosphate. Residues 51–75 (LVMGLGITVCVFIMLANLLVMVAIY) traverse the membrane as a helical segment. Over 76 to 83 (VNRRFHFP) the chain is Cytoplasmic. A helical membrane pass occupies residues 84 to 107 (IYYLMANLAAADFFAGLAYFYLMF). Residues 108-121 (NTGPNTRRLTVSTW) lie on the Extracellular side of the membrane. Residues 122-144 (LLRQGLIDTSLTASVANLLAIAI) traverse the membrane as a helical segment. Residue 124–129 (RQGLID) participates in a 1-acyl-sn-glycero-3-phosphate binding. Residues 145 to 163 (ERHITVFRMQLHTRMSNRR) are Cytoplasmic-facing. Residues 164-184 (VVVVIVVIWTMAIVMGAIPSV) traverse the membrane as a helical segment. Over 185-204 (GWNCICDIDHCSNMAPLYSD) the chain is Extracellular. Residues 205–225 (SYLVFWAIFNLVTFVVMVVLY) traverse the membrane as a helical segment. An a 1-acyl-sn-glycero-3-phosphate-binding site is contributed by Trp210. Topologically, residues 226–255 (AHIFGYVRQRTMRMSRHSSGPRRNRDTMMS) are cytoplasmic. The chain crosses the membrane as a helical span at residues 256 to 280 (LLKTVVIVLGAFIVCWTPGLVLLLL). At 281-294 (DVCCPQCDVLAYEK) the chain is on the extracellular side. The cysteines at positions 284 and 287 are disulfide-linked. The helical transmembrane segment at 295–315 (FFLLLAEFNSAMNPIIYSYRD) threads the bilayer. The Cytoplasmic portion of the chain corresponds to 316–364 (KEMSATFRQILCCQRNENPNGPTEGSDRSASSLNHTILAGVHSNDHSVV). Position 341 is a phosphoserine (Ser341). Phosphothreonine is present on Thr351.

Belongs to the G-protein coupled receptor 1 family. In terms of assembly, interacts with RALA and GRK2. Interacts with GNAQ and GNA13. Interacts with CD14; the interaction is enhanced by exposure to bacterial lipopolysaccharide (LPS). Post-translationally, N-glycosylated. In terms of tissue distribution, detected in lung. Detected in oligodendrocytes in corpus callosum in brain cortex (at protein level). Expressed within the embryonic cerebral cortex, where it is enriched in the ventricular zone. In the adult brain, also expressed in oligodendrocytes, as well as Schwann cells of the peripheral nervous system. Expressed in many other tissues, including lung, heart, intestine, spleen, thymus, and stomach. No expression in liver. Detected in kidney and testis. Detected in embryonic fibroblasts. Detected in adult lung fibroblasts and lung endothelial cells. Detected in dorsal root ganglion and dorsal root. Detected in astrocytes. Detected in bone.

The protein resides in the cell surface. It is found in the cell membrane. It localises to the endosome. Its function is as follows. Receptor for lysophosphatidic acid (LPA). Plays a role in the reorganization of the actin cytoskeleton, cell migration, differentiation and proliferation, and thereby contributes to the responses to tissue damage and infectious agents. Activates downstream signaling cascades via the G(i)/G(o), G(12)/G(13), and G(q) families of heteromeric G proteins. Signaling inhibits adenylyl cyclase activity and decreases cellular cAMP levels. Signaling triggers an increase of cytoplasmic Ca(2+) levels. Activates RALA; this leads to the activation of phospholipase C (PLC) and the formation of inositol 1,4,5-trisphosphate. Signaling mediates activation of down-stream MAP kinases. Contributes to the regulation of cell shape. Promotes Rho-dependent reorganization of the actin cytoskeleton in neuronal cells and neurite retraction. Promotes the activation of Rho and the formation of actin stress fibers. Promotes formation of lamellipodia at the leading edge of migrating cells via activation of RAC1. Through its function as LPA receptor, plays a role in chemotaxis and cell migration, including responses to injury and wounding. Plays a role in triggering inflammation in response to bacterial lipopolysaccharide (LPS) via its interaction with CD14. Promotes cell proliferation in response to LPA. Inhibits the intracellular ciliogenesis pathway in response to LPA and through AKT1 activation. Required for normal skeleton development. May play a role in osteoblast differentiation. Required for normal brain development. Required for normal proliferation, survival and maturation of newly formed neurons in the adult dentate gyrus. Plays a role in pain perception and in the initiation of neuropathic pain. This is Lysophosphatidic acid receptor 1 (Lpar1) from Mus musculus (Mouse).